The chain runs to 208 residues: Uracil phosphoribosyltransferase (208 aa).

5-phospho-alpha-D-ribose 1-diphosphate contacts are provided by residues R78, R103, and 130 to 138; that span reads DPMLATGGS. Uracil contacts are provided by residues I193 and 198-200; that span reads GDA. D199 contacts 5-phospho-alpha-D-ribose 1-diphosphate.

Belongs to the UPRTase family. Requires Mg(2+) as cofactor.

The enzyme catalyses UMP + diphosphate = 5-phospho-alpha-D-ribose 1-diphosphate + uracil. It functions in the pathway pyrimidine metabolism; UMP biosynthesis via salvage pathway; UMP from uracil: step 1/1. With respect to regulation, allosterically activated by GTP. Its function is as follows. Catalyzes the conversion of uracil and 5-phospho-alpha-D-ribose 1-diphosphate (PRPP) to UMP and diphosphate. This Desulfovibrio desulfuricans (strain ATCC 27774 / DSM 6949 / MB) protein is Uracil phosphoribosyltransferase.